The primary structure comprises 663 residues: Polyunsaturated fatty acid lipoxygenase ALOX15 (663 aa).

Residues 2–115 (GVYRIRVSTG…ILSLPEGTGC (114 aa)) form the PLAT domain. The region spanning 116 to 663 (TVVEDSQGLF…PSMVENSVAI (548 aa)) is the Lipoxygenase domain. Position 149 is a phosphoserine (Ser-149). Fe cation is bound by residues His-361, His-366, His-541, His-545, and Ile-663.

It belongs to the lipoxygenase family. In terms of assembly, interacts with PEBP1; in response to IL13/interleukin-13, prevents the interaction of PEBP1 with RAF1 to activate the ERK signaling cascade. Fe cation serves as cofactor. Detected in leukocytes, lung and aorta.

It is found in the cytoplasm. The protein resides in the cytosol. The protein localises to the cell membrane. Its subcellular location is the lipid droplet. It catalyses the reaction (5Z,8Z,11Z,14Z)-eicosatetraenoate + O2 = (12S)-hydroperoxy-(5Z,8Z,10E,14Z)-eicosatetraenoate. It carries out the reaction (5Z,8Z,11Z,14Z)-eicosatetraenoate + O2 = (15S)-hydroperoxy-(5Z,8Z,11Z,13E)-eicosatetraenoate. The catalysed reaction is (9Z,12Z)-octadecadienoate + O2 = (13S)-hydroperoxy-(9Z,11E)-octadecadienoate. The enzyme catalyses (12S)-hydroperoxy-(5Z,8Z,10E,14Z)-eicosatetraenoate = (8S)-hydroxy-(11S,12S)-epoxy-(5Z,9E,14Z)-eicosatrienoate. It catalyses the reaction (5Z,8Z,11Z,14Z)-eicosatetraenoate + 2 O2 = (14R,15S)-dihydroperoxy-(5Z,8Z,10E,12E)-eicosatetraenoate. It carries out the reaction (5Z,8Z,11Z,14Z)-eicosatetraenoate + 2 O2 = (8S,15S)-dihydroperoxy-(5Z,9E,11Z,13E)-eicosatetraenoate. The catalysed reaction is (14S,15R)-epoxy-(5Z,8Z,11Z)-eicosatrienoate + O2 = (8S)-hydroperoxy-(14S,15R)-epoxy-(5Z,9E,11Z)-eicosatrienoate. The enzyme catalyses (14S,15R)-epoxy-(5Z,8Z,11Z)-eicosatrienoate + O2 = (12S)-hydroperoxy-(14S,15R)-epoxy-(5Z,8Z,10E)-eicosatrienoate. It catalyses the reaction (14R,15S)-epoxy-(5Z,8Z,11Z)-eicosatrienoate + O2 = (5S)-hydroperoxy-(14R,15S)-epoxy-(6E,8Z,11Z)-eicosatrienoate. It carries out the reaction (14R,15S)-epoxy-(5Z,8Z,11Z)-eicosatrienoate + O2 = (12S)-hydroperoxy-(14R,15S)-epoxy-(5Z,8Z,10E)-eicosatrienoate. The catalysed reaction is (15R)-hydroperoxy-(5Z,8Z,11Z,13E)-eicosatetraenoate = 15-oxo-(5Z,8Z,11Z,13E)-eicosatetraenoate + H2O. The enzyme catalyses (15S)-hydroperoxy-(5Z,8Z,11Z,13E)-eicosatetraenoate = (14S,15S)-epoxy-(5Z,8Z,10E,12E)-eicosatetraenoate + H2O. It catalyses the reaction (4Z,7Z,10Z,13Z,16Z)-docosapentaenoate + O2 = 14-hydroperoxy-(4Z,7Z,10Z,12E,16Z)-docosapentaenoate. It carries out the reaction (7Z,10Z,13Z,16Z,19Z)-docosapentaenoate + O2 = 14-hydroperoxy-(7Z,10Z,12E,16Z,19Z)-docosapentaenoate. The catalysed reaction is (4Z,7Z,10Z,13Z,16Z,19Z)-docosahexaenoate + O2 = (14S)-hydroperoxy-(4Z,7Z,10Z,12E,16Z,19Z)-docosahexaenoate. The enzyme catalyses (4Z,7Z,10Z,13Z,16Z,19Z)-docosahexaenoate + O2 = (17S)-hydroperoxy-(4Z,7Z,10Z,13Z,15E,19Z)-docosahexaenoate. It catalyses the reaction (7S)-hydroperoxy-(4Z,8E,10Z,13Z,16Z,19Z)-docosahexaenoate + O2 = (7S,14S)-dihydroperoxy-(4Z,8E,10Z,12E,16Z,19Z)-docosahexaenoate. It carries out the reaction (7S)-hydroperoxy-(4Z,8E,10Z,13Z,16Z,19Z)-docosahexaenoate + O2 = (7S,17S)-dihydroperoxy-(4Z,8E,10Z,13Z,15E,19Z)-docosahexaenoate. The catalysed reaction is (4Z,7Z,10Z,13Z,16Z,19Z)-docosahexaenoate + O2 = (11S)-hydroperoxy-(4Z,7Z,9E,13Z,16Z,19Z)-docosahexaenoate. The enzyme catalyses N-(5Z,8Z,11Z,14Z)-eicosatetraenoyl-taurine + O2 = N-(12S)-hydroperoxy-(5Z,8Z,10E,14Z)-eicosatetraenoyl-taurine. It catalyses the reaction N-(5Z,8Z,11Z,14Z)-eicosatetraenoyl-gamma-aminobutanoate + O2 = N-(12S)-hydroperoxy-(5Z,8Z,10E,14Z)-eicosatetraenoyl-gamma-aminobutanoate. It carries out the reaction N-(5Z,8Z,11Z,14Z)-eicosatetraenoyl-glycine + O2 = N-(12S)-hydroperoxy-(5Z,8Z,10E,14Z)-eicosatetraenoyl-glycine. The catalysed reaction is N-(5Z,8Z,11Z,14Z)-eicosatetraenoyl-L-alanine + O2 = N-(12S)-hydroperoxy-(5Z,8Z,10E,14Z)-eicosatetraenoyl-alanine. The enzyme catalyses N-(5Z,8Z,11Z,14Z)-eicosatetraenoyl-taurine + O2 = N-(15S)-hydroperoxy-(5Z,8Z,11Z,13E)-eicosatetraenoyl-taurine. It catalyses the reaction N-(5Z,8Z,11Z,14Z)-eicosatetraenoyl-gamma-aminobutanoate + O2 = N-(15S)-hydroperoxy-(5Z,8Z,11Z,13E)-eicosatetraenoyl-gamma-aminobutanoate. It carries out the reaction N-(5Z,8Z,11Z,14Z)-eicosatetraenoyl-glycine + O2 = N-(15S)-hydroperoxy-(5Z,8Z,11Z,13E)-eicosatetraenoyl-glycine. The catalysed reaction is N-(5Z,8Z,11Z,14Z)-eicosatetraenoyl-L-alanine + O2 = N-(15S)-hydroperoxy-(5Z,8Z,11Z,13E)-eicosatetraenoyl-alanine. It functions in the pathway lipid metabolism; hydroperoxy eicosatetraenoic acid biosynthesis. Its function is as follows. Non-heme iron-containing dioxygenase that catalyzes the stereo-specific peroxidation of free and esterified polyunsaturated fatty acids generating a spectrum of bioactive lipid mediators. It inserts peroxyl groups at C12 or C15 of arachidonate ((5Z,8Z,11Z,14Z)-eicosatetraenoate) producing both 12-hydroperoxyeicosatetraenoate/12-HPETE and 15-hydroperoxyeicosatetraenoate/15-HPETE. It may then act on 12-HPETE to produce hepoxilins, which may show pro-inflammatory properties. Can also peroxidize linoleate ((9Z,12Z)-octadecadienoate) to 13-hydroperoxyoctadecadienoate. May participate in the sequential oxidations of DHA ((4Z,7Z,10Z,13Z,16Z,19Z)-docosahexaenoate) to generate specialized pro-resolving mediators (SPMs)like resolvin D5 ((7S,17S)-diHPDHA) and (7S,14S)-diHPDHA, that actively down-regulate the immune response and have anti-aggregation properties with platelets. Can convert epoxy fatty acids to hydroperoxy-epoxides derivatives followed by an intramolecular nucleophilic substitution leading to the formation of monocyclic endoperoxides. Plays an important role during the maintenance of self-tolerance by peroxidizing membrane-bound phosphatidylethanolamine which can then signal the sorting process for clearance of apoptotic cells during inflammation and prevent an autoimmune response. In addition to its role in the immune and inflammatory responses, this enzyme may play a role in epithelial wound healing in the cornea through production of lipoxin A4 (LXA(4)) and docosahexaenoic acid-derived neuroprotectin D1 (NPD1; 10R,17S-HDHA), both lipid autacoids exhibit anti-inflammatory and neuroprotective properties. Furthermore, it may regulate actin polymerization which is crucial for several biological processes such as the phagocytosis of apoptotic cells. It is also implicated in the generation of endogenous ligands for peroxisome proliferator activated receptor (PPAR-gamma), hence modulating macrophage development and function. It may also exert a negative effect on skeletal development by regulating bone mass through this pathway. As well as participates in ER stress and downstream inflammation in adipocytes, pancreatic islets, and liver. Finally, it is also involved in the cellular response to IL13/interleukin-13. The polypeptide is Polyunsaturated fatty acid lipoxygenase ALOX15 (Rattus norvegicus (Rat)).